A 359-amino-acid chain; its full sequence is Protein Wnt-5b (359 aa).

Residues 1 to 17 form the signal peptide; sequence MPSLLLVVVAALLSSWA. A disulfide bridge links Cys83 with Cys94. 2 N-linked (GlcNAc...) asparagine glycosylation sites follow: Asn93 and Asn99. 10 disulfides stabilise this stretch: Cys133–Cys141, Cys143–Cys161, Cys217–Cys231, Cys219–Cys226, Cys288–Cys319, Cys304–Cys314, Cys318–Cys358, Cys334–Cys349, Cys336–Cys346, and Cys341–Cys342. The O-palmitoleoyl serine; by PORCN moiety is linked to residue Ser223. 2 N-linked (GlcNAc...) asparagine glycosylation sites follow: Asn291 and Asn305.

It belongs to the Wnt family. In terms of assembly, interacts with PORCN. In terms of processing, palmitoleoylation is required for efficient binding to frizzled receptors. Depalmitoleoylation leads to Wnt signaling pathway inhibition.

It localises to the secreted. Its subcellular location is the extracellular space. The protein localises to the extracellular matrix. In terms of biological role, ligand for members of the frizzled family of seven transmembrane receptors. Probable developmental protein. May be a signaling molecule which affects the development of discrete regions of tissues. Is likely to signal over only few cell diameters. The polypeptide is Protein Wnt-5b (Wnt5b) (Mus musculus (Mouse)).